Consider the following 585-residue polypeptide: Aspartate--tRNA ligase (585 aa).

Glu173 is a binding site for L-aspartate. The interval 197–200 (QTLK) is aspartate. Arg219 lines the L-aspartate pocket. ATP is bound by residues 219-221 (RDE) and Gln228. His446 contributes to the L-aspartate binding site. Glu480 contacts ATP. Arg487 is an L-aspartate binding site. An ATP-binding site is contributed by 532–535 (GLDR).

This sequence belongs to the class-II aminoacyl-tRNA synthetase family. Type 1 subfamily. Homodimer.

The protein resides in the cytoplasm. It carries out the reaction tRNA(Asp) + L-aspartate + ATP = L-aspartyl-tRNA(Asp) + AMP + diphosphate. Its function is as follows. Catalyzes the attachment of L-aspartate to tRNA(Asp) in a two-step reaction: L-aspartate is first activated by ATP to form Asp-AMP and then transferred to the acceptor end of tRNA(Asp). This Parabacteroides distasonis (strain ATCC 8503 / DSM 20701 / CIP 104284 / JCM 5825 / NCTC 11152) protein is Aspartate--tRNA ligase.